The primary structure comprises 497 residues: Cysteine desulfurase, mitochondrial (497 aa).

A mitochondrion-targeting transit peptide spans 1 to 33 (MLKSTATRSITRLSQVYNVPAATYRACLVSRRF). Residues 168–169 (AT), Asn248, Gln276, and 296–298 (SSH) contribute to the pyridoxal 5'-phosphate site. Residue Lys299 is modified to N6-(pyridoxal phosphate)lysine. Residue Thr336 participates in pyridoxal 5'-phosphate binding. The active-site Cysteine persulfide intermediate is the Cys421. Position 421 (Cys421) interacts with [2Fe-2S] cluster.

Belongs to the class-V pyridoxal-phosphate-dependent aminotransferase family. NifS/IscS subfamily. Requires pyridoxal 5'-phosphate as cofactor.

The protein localises to the mitochondrion. It carries out the reaction (sulfur carrier)-H + L-cysteine = (sulfur carrier)-SH + L-alanine. Catalyzes the removal of elemental sulfur from cysteine to produce alanine. It supplies the inorganic sulfur for iron-sulfur (Fe-S) clusters. Plays a role in both tRNA-processing and mitochondrial metabolism. Involved in the 2-thio-modification of both 5-carboxymethylaminomethyl-2-thiouridine in mitochondrial tRNAs and 5-methoxycarbonylmethyl-2-thiouridine (mcm5s2U) in cytoplasmic tRNAs. In Saccharomyces cerevisiae (strain ATCC 204508 / S288c) (Baker's yeast), this protein is Cysteine desulfurase, mitochondrial.